The chain runs to 442 residues: MTPDLVARFWLVELHVRLPAWLRGITSASASVAVKRPGSSKKPLEPAPQPAPYKPTHYRHIIYAYDVMEEKCEIPVLEHDPFDFLDPQKTLVPPENTILIDPVAVGLPWFSTMKGTPQCIHWREAEAAGLELIEQVMAARGAGAVIPEKLKTSDQRRKMMELVETAVTICIYLYAVSDAARIRVLTKSIVFLFLHDDVMESKANAEGNSILEGWDTDTFKANELEGESRNDIFLDFCREAIALDPVLGLELMQDTVRWARYSRVNSTKADKTHATWQDFRDFRELDIAYDFMITAVRFGAAILYDPAERPVFEWIEKLYIRHCLYINDLYSYEKEFREHQQEGAPLHNSVHMIEQVLSVPPGSAKAILRSVLWDCERQVREEYVRLMQLPELTHTQKVYLQRLIESFAGNYMYSMSTYRYARLSGKLIGPPPEDCLLKNYVQ.

4 residues coordinate Mg(2+): aspartate 196, asparagine 327, serine 331, and glutamate 335. 2 residues coordinate (2E,6E)-farnesyl diphosphate: arginine 419 and tyrosine 420.

Belongs to the terpene synthase family. As to quaternary structure, homodimer. The cofactor is Mg(2+).

The catalysed reaction is (2E,6E)-farnesyl diphosphate = dauca-4,7-diene + diphosphate. The protein operates within secondary metabolite biosynthesis. In terms of biological role, terpene cyclase; part of the gene cluster that mediates the biosynthesis of aculenes, a unique type of norsesquiterpenes that contain a nordaucane skeleton linked to an L-proline moiety and are of mixed biosynthetic origin. The pathway begins with the synthesis of dauca-4,7-diene by the terpene cyclase aneC using farnesyl pyrophosphate (FPP) as substrate. The cytochrome P450 monooxygenase aneF then performs the initial oxidation at C-12 of dauca-4,7-diene to yield asperaculane D. Asperaculane D is substrate of the cytochrome P450 monooxygenase aneD for C-10 hydroxylation to yield asperaculane E. The cytochrome P450 monooxygenase aneG then converts asperaculane E into aculene D via C-2 oxidation. The monomodular nonribosomal peptide synthtase aneB adenylates L-proline and the thiohydrolase aneE transfers this activated L-proline derivative to aculenes D and C to produce respectively aculenes B and A. The dioxygenase aneA converts aculene D into aculene C, and aculene B into aculene A by introducing the 5,6-alkene moiety. Asperculanes A, B, C and F, as well as 14-prolyl asperculane C, might be shunt products of the pathway. This Aspergillus aculeatus (strain ATCC 16872 / CBS 172.66 / WB 5094) protein is Terpene cyclase aneC.